We begin with the raw amino-acid sequence, 185 residues long: Translation initiation factor IF-3 (185 aa).

It belongs to the IF-3 family. As to quaternary structure, monomer.

The protein resides in the cytoplasm. In terms of biological role, IF-3 binds to the 30S ribosomal subunit and shifts the equilibrium between 70S ribosomes and their 50S and 30S subunits in favor of the free subunits, thus enhancing the availability of 30S subunits on which protein synthesis initiation begins. The polypeptide is Translation initiation factor IF-3 (Coxiella burnetii (strain RSA 493 / Nine Mile phase I)).